Consider the following 236-residue polypeptide: Sugar fermentation stimulation protein homolog (236 aa).

It belongs to the SfsA family.

The protein is Sugar fermentation stimulation protein homolog of Paramagnetospirillum magneticum (strain ATCC 700264 / AMB-1) (Magnetospirillum magneticum).